We begin with the raw amino-acid sequence, 142 residues long: Hemoglobin subunit alpha-B (142 aa).

The region spanning 2 to 142 (PFSASDRHDI…VSETLYSKYR (141 aa)) is the Globin domain. Residue Gln59 participates in O2 binding. His88 contributes to the heme b binding site.

This sequence belongs to the globin family. In terms of assembly, heterotetramer of either two alpha-B chains or two alpha-C chains and two beta chains. The two major hemoglobins, B and C, associate upon deoxygenation to form a trimer of tetramers, BC2, that has a much lower affinity for oxygen than either component alone. Red blood cells.

The alpha-B chain is a component of adult hemoglobin B. This chain is Hemoglobin subunit alpha-B, found in Aquarana catesbeiana (American bullfrog).